Reading from the N-terminus, the 174-residue chain is Myelin basic protein (174 aa).

Residues 1–86 (MASQKRSSFR…GRPGDDNPVV (86 aa)) are disordered. Ala-2 is subject to N-acetylalanine; in forms C1, C2 and C3. Residue Gln-4 is modified to Deamidated glutamine; in forms C1 and C2; partial. Position 8 is a phosphoserine; in forms C2 and C3 (Ser-8). Residue Ser-19 is modified to Phosphoserine; in form C2. A compositionally biased stretch (basic and acidic residues) spans 22–35 (DHARHGSPRHRDSG). Arg-25 bears the Citrulline; in forms C1, C2 and C3 mark. Phosphoserine; in forms C2 and C3 is present on Ser-34. Arg-42 carries the post-translational modification Citrulline; in form C3. Basic and acidic residues predominate over residues 45-61 (GGDRHVPRRGFGKDIHA). Ser-65 is subject to Phosphoserine; in forms C2 and C3. The residue at position 72 (Gln-72) is a Deamidated glutamine; in forms C1, C2 and C3; partial. The residue at position 74 (Ser-74) is a Phosphoserine; in form C2. Asn-91 is modified (deamidated asparagine; in forms C1, C2 and C3; partial). Phosphothreonine; in forms C2 and C3 is present on Thr-97. The residue at position 102 (Gln-102) is a Deamidated glutamine; in forms C1, C2 and C3; partial. Gln-102 is modified (deamidated glutamine; in form C1). At Arg-106 the chain carries Omega-N-methylarginine; in forms C1, C2 and C3; alternate. Arg-106 is subject to Symmetric dimethylarginine; in forms C1, C2 and C3; alternate. 2 positions are modified to phosphoserine; in forms C2 and C3: Ser-114 and Ser-142. Positions 126–174 (SGKFYEHKSAHKGHKGSYHEGQGTLSKIFKLGGSGSRPGSRSGSPVARR) are disordered. The residue at position 147 (Gln-147) is a Deamidated glutamine; in forms C1, C2 and C3; partial. Over residues 162–174 (RPGSRSGSPVARR) the composition is skewed to low complexity. A Phosphoserine; in forms C2 and C3 modification is found at Ser-165. Arg-166 is modified (citrulline; in forms C2 and C3). Ser-169 bears the Phosphoserine; in forms C2 and C3 mark.

It belongs to the myelin basic protein family. As to quaternary structure, homodimer. Several charge isomers are produced as a result of optional post-translational modifications, such as phosphorylation of serine or threonine residues, deamidation of glutamine or asparagine residues, citrullination and methylation of arginine residues. Chicken MBP contains 4 charge components denoted as C1, C2, C3 and C8. C1 lacks any phosphorylation sites, whereas C2 and C3 contain respectively 10 and 8 phosphorylation sites and arginine residues modified to citrulline. All three charge components contain deamidated glutamines and asparagine, and a methylated arginine.

It localises to the myelin membrane. In terms of biological role, is, with PLP, the most abundant protein component of the myelin membrane in the CNS. Has a role in both the formation and stabilization of this compact multilayer arrangement of bilayers. Each splice variant and charge isomer may have a specialized function in the assembly of an optimized, biochemically functional myelin membrane. This Gallus gallus (Chicken) protein is Myelin basic protein (MBP).